Here is a 385-residue protein sequence, read N- to C-terminus: Beta sliding clamp (385 aa).

This sequence belongs to the beta sliding clamp family. Forms a ring-shaped head-to-tail homodimer around DNA which binds and tethers DNA polymerases and other proteins to the DNA. The DNA replisome complex has a single clamp-loading complex (3 tau and 1 each of delta, delta', psi and chi subunits) which binds 3 Pol III cores (1 core on the leading strand and 2 on the lagging strand) each with a beta sliding clamp dimer. Additional proteins in the replisome are other copies of gamma, psi and chi, Ssb, DNA helicase and RNA primase.

The protein resides in the cytoplasm. Functionally, confers DNA tethering and processivity to DNA polymerases and other proteins. Acts as a clamp, forming a ring around DNA (a reaction catalyzed by the clamp-loading complex) which diffuses in an ATP-independent manner freely and bidirectionally along dsDNA. Initially characterized for its ability to contact the catalytic subunit of DNA polymerase III (Pol III), a complex, multichain enzyme responsible for most of the replicative synthesis in bacteria; Pol III exhibits 3'-5' exonuclease proofreading activity. The beta chain is required for initiation of replication as well as for processivity of DNA replication. This chain is Beta sliding clamp (dnaN), found in Borreliella burgdorferi (strain ATCC 35210 / DSM 4680 / CIP 102532 / B31) (Borrelia burgdorferi).